Reading from the N-terminus, the 194-residue chain is dCTP deaminase (194 aa).

DCTP is bound by residues 110–115 (RSSLAR), D128, 136–138 (VLE), Y171, K178, and Q182. E138 serves as the catalytic Proton donor/acceptor. The tract at residues 175–194 (KDAKYKNQQSAVSSRINQDD) is disordered. Residues 180–194 (KNQQSAVSSRINQDD) show a composition bias toward polar residues.

It belongs to the dCTP deaminase family. In terms of assembly, homotrimer.

The enzyme catalyses dCTP + H2O + H(+) = dUTP + NH4(+). It participates in pyrimidine metabolism; dUMP biosynthesis; dUMP from dCTP (dUTP route): step 1/2. In terms of biological role, catalyzes the deamination of dCTP to dUTP. The protein is dCTP deaminase of Actinobacillus pleuropneumoniae serotype 5b (strain L20).